We begin with the raw amino-acid sequence, 301 residues long: Uricase-2 isozyme 2 (301 aa).

Active-site charge relay system residues include Lys-17 and Thr-63. Residues Thr-63, Asp-64, Phe-165, Arg-182, Val-237, Gln-238, and Asn-257 each contribute to the urate site. The active-site Charge relay system is the His-259. The Microbody targeting signal signature appears at Ser-299 to Leu-301.

It belongs to the uricase family.

The protein localises to the peroxisome. It carries out the reaction urate + O2 + H2O = 5-hydroxyisourate + H2O2. The protein operates within purine metabolism; urate degradation; (S)-allantoin from urate: step 1/3. Catalyzes the oxidation of uric acid to 5-hydroxyisourate, which is further processed to form (S)-allantoin. This Canavalia lineata (Beach bean) protein is Uricase-2 isozyme 2.